The chain runs to 151 residues: UPF0178 protein YaiI (151 aa).

This sequence belongs to the UPF0178 family.

The chain is UPF0178 protein YaiI from Salmonella agona (strain SL483).